A 197-amino-acid chain; its full sequence is Elongation factor Ts (197 aa).

Residues 81–84 (TDFV) form an involved in Mg(2+) ion dislocation from EF-Tu region.

This sequence belongs to the EF-Ts family.

It localises to the cytoplasm. Functionally, associates with the EF-Tu.GDP complex and induces the exchange of GDP to GTP. It remains bound to the aminoacyl-tRNA.EF-Tu.GTP complex up to the GTP hydrolysis stage on the ribosome. The protein is Elongation factor Ts of Thermotoga neapolitana (strain ATCC 49049 / DSM 4359 / NBRC 107923 / NS-E).